Reading from the N-terminus, the 502-residue chain is ATP synthase subunit alpha (502 aa).

Residues 115–137 (VDGLGPVETTETRPIESPAPGVM) are disordered. Residue 169-176 (GDRQTGKT) coordinates ATP.

The protein belongs to the ATPase alpha/beta chains family. As to quaternary structure, F-type ATPases have 2 components, CF(1) - the catalytic core - and CF(0) - the membrane proton channel. CF(1) has five subunits: alpha(3), beta(3), gamma(1), delta(1), epsilon(1). CF(0) has three main subunits: a(1), b(2) and c(9-12). The alpha and beta chains form an alternating ring which encloses part of the gamma chain. CF(1) is attached to CF(0) by a central stalk formed by the gamma and epsilon chains, while a peripheral stalk is formed by the delta and b chains.

It is found in the cell membrane. The enzyme catalyses ATP + H2O + 4 H(+)(in) = ADP + phosphate + 5 H(+)(out). Produces ATP from ADP in the presence of a proton gradient across the membrane. The alpha chain is a regulatory subunit. This chain is ATP synthase subunit alpha, found in Geobacillus stearothermophilus (Bacillus stearothermophilus).